The primary structure comprises 387 residues: Phosphoglycerate kinase (387 aa).

Substrate contacts are provided by residues 21-23, Arg-36, 59-62, Arg-113, and Arg-146; these read DLN and HLGR. ATP-binding positions include Lys-197, Glu-314, and 340–343; that span reads GGDT.

The protein belongs to the phosphoglycerate kinase family. In terms of assembly, monomer.

Its subcellular location is the cytoplasm. It catalyses the reaction (2R)-3-phosphoglycerate + ATP = (2R)-3-phospho-glyceroyl phosphate + ADP. It functions in the pathway carbohydrate degradation; glycolysis; pyruvate from D-glyceraldehyde 3-phosphate: step 2/5. This is Phosphoglycerate kinase from Pseudomonas putida (strain ATCC 47054 / DSM 6125 / CFBP 8728 / NCIMB 11950 / KT2440).